The chain runs to 477 residues: Trigger factor (477 aa).

The PPIase FKBP-type domain maps to 174–261; it reads GDIAVVSFKG…LKDLKEKELP (88 aa). The segment at 435–477 is disordered; it reads VNEKTTKTSKATKTSKTTKATKTATKTTKTTKTTKTQNKKEKK. Residues 442 to 470 show a composition bias toward low complexity; it reads TSKATKTSKTTKATKTATKTTKTTKTTKT.

This sequence belongs to the FKBP-type PPIase family. Tig subfamily.

The protein resides in the cytoplasm. It carries out the reaction [protein]-peptidylproline (omega=180) = [protein]-peptidylproline (omega=0). Functionally, involved in protein export. Acts as a chaperone by maintaining the newly synthesized protein in an open conformation. Functions as a peptidyl-prolyl cis-trans isomerase. This chain is Trigger factor, found in Prochlorococcus marinus (strain MIT 9301).